Consider the following 468-residue polypeptide: ATP synthase subunit beta (468 aa).

ATP is bound at residue 148-155; it reads GGAGVGKT.

The protein belongs to the ATPase alpha/beta chains family. As to quaternary structure, F-type ATPases have 2 components, CF(1) - the catalytic core - and CF(0) - the membrane proton channel. CF(1) has five subunits: alpha(3), beta(3), gamma(1), delta(1), epsilon(1). CF(0) has three main subunits: a(1), b(2) and c(9-12). The alpha and beta chains form an alternating ring which encloses part of the gamma chain. CF(1) is attached to CF(0) by a central stalk formed by the gamma and epsilon chains, while a peripheral stalk is formed by the delta and b chains.

The protein localises to the cell inner membrane. The catalysed reaction is ATP + H2O + 4 H(+)(in) = ADP + phosphate + 5 H(+)(out). Functionally, produces ATP from ADP in the presence of a proton gradient across the membrane. The catalytic sites are hosted primarily by the beta subunits. The sequence is that of ATP synthase subunit beta from Xanthomonas oryzae pv. oryzae (strain KACC10331 / KXO85).